Reading from the N-terminus, the 440-residue chain is D-serine dehydratase (440 aa).

Lys116 is modified (N6-(pyridoxal phosphate)lysine).

Belongs to the serine/threonine dehydratase family. DsdA subfamily. As to quaternary structure, monomer. Pyridoxal 5'-phosphate is required as a cofactor.

It catalyses the reaction D-serine = pyruvate + NH4(+). This Salmonella arizonae (strain ATCC BAA-731 / CDC346-86 / RSK2980) protein is D-serine dehydratase.